Here is a 529-residue protein sequence, read N- to C-terminus: Corneodesmosin (529 aa).

The signal sequence occupies residues 1–32 (MGSSRAPWMGRVGGHGMMALLLAGLLLPGTLA). 2 disordered regions span residues 38-248 (FSDP…SVSG) and 383-492 (GSTG…SSAG). 6 stretches are compositionally biased toward low complexity: residues 58–83 (GKGDSSGFSSYSGSSSSGSSISSARS), 90–100 (GSSSGSSIAQG), 111–175 (GYSQ…NGSA), 189–231 (PSQP…SGGP), 392–408 (SPSSSRVPSSSSISSSS), and 426–441 (PGTGSFSSSSSSQSSG). A glycan (N-linked (GlcNAc...) asparagine) is linked at Asn-172. Over residues 449-467 (GSKSSSSGHPCMSVSSLTL) the composition is skewed to polar residues.

The protein localises to the secreted. Functionally, important for the epidermal barrier integrity. This is Corneodesmosin (CDSN) from Pan troglodytes (Chimpanzee).